Reading from the N-terminus, the 329-residue chain is uncharacterized protein (329 aa).

Residues 109-147 form a disordered region; sequence KALGNDQTSSMTSSTTAVTVAKSGDGQQQTGEQKEEDWK. Residues 116-131 are compositionally biased toward low complexity; the sequence is TSSMTSSTTAVTVAKS.

The protein to the C-terminal of MG321/MPN_456.

This is an uncharacterized protein from Mycoplasma pneumoniae (strain ATCC 29342 / M129 / Subtype 1) (Mycoplasmoides pneumoniae).